The chain runs to 288 residues: 11-beta-hydroxysteroid dehydrogenase 1 (288 aa).

Topologically, residues 1–4 are cytoplasmic; the sequence is MKKY. A helical; Signal-anchor for type II membrane protein transmembrane segment spans residues 5–20; that stretch reads LLPVLVLCLGYYYSTN. At 21–288 the chain is on the lumenal side; sequence EEFRPEMLQG…SYNRDLFVSN (268 aa). Residues 37–63, 88–89, and 115–117 contribute to the NADP(+) site; these read GASK…TARS, TM, and NHI. Residue N158 is glycosylated (N-linked (GlcNAc...) asparagine). S166 contacts substrate. Y179 (proton acceptor) is an active-site residue. 179–183 is an NADP(+) binding site; it reads YSASK. Residue N203 is glycosylated (N-linked (GlcNAc...) asparagine). Residues 212-218 and 214-218 each bind NADP(+); these read GFIDTET and IDTET.

It belongs to the short-chain dehydrogenases/reductases (SDR) family. As to quaternary structure, homodimer. Glycosylated. In terms of tissue distribution, liver, kidney, lung and testis. Brain. Expressed in liver (at protein level).

Its subcellular location is the endoplasmic reticulum membrane. It carries out the reaction an 11beta-hydroxysteroid + NADP(+) = an 11-oxosteroid + NADPH + H(+). It catalyses the reaction corticosterone + NADP(+) = 11-dehydrocorticosterone + NADPH + H(+). The catalysed reaction is a 7beta-hydroxysteroid + NADP(+) = a 7-oxosteroid + NADPH + H(+). The enzyme catalyses 7-oxocholesterol + NADPH + H(+) = 7beta-hydroxycholesterol + NADP(+). It carries out the reaction chenodeoxycholate + NADP(+) = 7-oxolithocholate + NADPH + H(+). It catalyses the reaction 7-oxolithocholate + NADPH + H(+) = ursodeoxycholate + NADP(+). The catalysed reaction is glycochenodeoxycholate + NADP(+) = 7-oxoglycolithocholate + NADPH + H(+). The enzyme catalyses taurochenodeoxycholate + NADP(+) = 7-oxotaurolithocholate + NADPH + H(+). It carries out the reaction tauroursodeoxycholate + NADP(+) = 7-oxotaurolithocholate + NADPH + H(+). It catalyses the reaction glycoursodeoxycholate + NADP(+) = 7-oxoglycolithocholate + NADPH + H(+). The catalysed reaction is 7-oxopregnenolone + NADPH + H(+) = 7beta-hydroxypregnenolone + NADP(+). The enzyme catalyses 3beta,7alpha-dihydroxyandrost-5-en-17-one + NADP(+) = 3beta-hydroxy-5-androstene-7,17-dione + NADPH + H(+). It carries out the reaction 3beta-hydroxy-5-androstene-7,17-dione + NADPH + H(+) = 3beta,7beta-dihydroxyandrost-5-en-17-one + NADP(+). It catalyses the reaction 3beta-hydroxy-5alpha-androstane-7,17-dione + NADPH + H(+) = 3beta,7beta-dihydroxy-5alpha-androstan-17-one + NADP(+). In terms of biological role, controls the reversible conversion of biologically active glucocorticoids such as 11-dehydrocorticosterone to corticosterone using NADP(H). Participates in the corticosteroid receptor-mediated anti-inflammatory response, as well as metabolic and homeostatic processes. Bidirectional in vitro, predominantly functions as a reductase in vivo, thereby increasing the concentration of active glucocorticoids. It has broad substrate specificity, besides glucocorticoids, it accepts other steroid and sterol substrates. Interconverts 7-oxo- and 7-hydroxy-neurosteroids such as 7-oxopregnenolone and 7beta-hydroxypregnenolone, 7-oxodehydroepiandrosterone (3beta-hydroxy-5-androstene-7,17-dione) and 7beta-hydroxydehydroepiandrosterone (3beta,7beta-dihydroxyandrost-5-en-17-one), among others. Catalyzes the stereo-specific conversion of the major dietary oxysterol, 7-ketocholesterol (7-oxocholesterol), into the more polar 7-beta-hydroxycholesterol metabolite. 7-oxocholesterol is one of the most important oxysterols, it participates in several events such as induction of apoptosis, accumulation in atherosclerotic lesions, lipid peroxidation, and induction of foam cell formation. Mediates the 7-oxo reduction of 7-oxolithocholate mainly to chenodeoxycholate, and to a lesser extent to ursodeoxycholate, both in its free form and when conjugated to glycine or taurine, providing a link between glucocorticoid activation and bile acid metabolism. Catalyzes the synthesis of 7-beta-25-dihydroxycholesterol from 7-oxo-25-hydroxycholesterol in vitro, which acts as a ligand for the G-protein-coupled receptor (GPCR) Epstein-Barr virus-induced gene 2 (EBI2) and may thereby regulate immune cell migration. This chain is 11-beta-hydroxysteroid dehydrogenase 1, found in Rattus norvegicus (Rat).